The primary structure comprises 63 residues: Juvenile hormone esterase, isoform B (63 aa).

The N-linked (GlcNAc...) asparagine glycan is linked to N20.

The protein belongs to the type-B carboxylesterase/lipase family. Fat body, the site of their biosynthesis, and the hemolymph where it is secreted.

The catalysed reaction is juvenile hormone I + H2O = juvenile hormone I carboxylate + methanol + H(+). It carries out the reaction juvenile hormone III + H2O = juvenile hormone III carboxylate + methanol + H(+). Its function is as follows. JH esterase plays a crucial role in the decrease of JH activity in lepidopteran insects, by hydrolyzing the methyl ester of JH. It is also involved in the transport of JH. The protein is Juvenile hormone esterase, isoform B of Trichoplusia ni (Cabbage looper).